A 521-amino-acid polypeptide reads, in one-letter code: Melanopsin (521 aa).

The Extracellular portion of the chain corresponds to 1–71; that stretch reads MDSPSGPRVL…VDVPDHAHYT (71 aa). Asn-30 and Asn-34 each carry an N-linked (GlcNAc...) asparagine glycan. Residues 72–92 form a helical membrane-spanning segment; it reads LGTVILLVGLTGMLGNLTVIY. The Cytoplasmic segment spans residues 93 to 106; that stretch reads TFCRNRGLRTPANM. A helical membrane pass occupies residues 107–127; sequence FIINLAVSDFLMSVTQAPVFF. Over 128 to 143 the chain is Extracellular; the sequence is ASSLYKKWLFGETGCE. A disulfide bond links Cys-142 and Cys-220. A helical transmembrane segment spans residues 144-164; sequence FYAFCGAVFGITSMITLTAIA. At 165–187 the chain is on the cytoplasmic side; sequence MDRYLVITRPLATIGRGSKRRTA. A helical membrane pass occupies residues 188–208; the sequence is LVLLGVWLYALAWSLPPFFGW. At 209–237 the chain is on the extracellular side; sequence SAYVPEGLLTSCSWDYMTFTPQVRAYTML. Residues 238–258 traverse the membrane as a helical segment; the sequence is LFCFVFFLPLLIIIFCYIFIF. Over 259–293 the chain is Cytoplasmic; the sequence is RAIRETGRACEGCGESPLRQRRQWQRLQSEWKMAK. A helical membrane pass occupies residues 294–314; it reads VALIVILLFVLSWAPYSTVAL. Over 315–329 the chain is Extracellular; sequence VAFAGYSHILTPYMS. The chain crosses the membrane as a helical span at residues 330-350; it reads SVPAVIAKASAIHNPIIYAIT. Position 337 is an N6-(retinylidene)lysine (Lys-337). Topologically, residues 351 to 521 are cytoplasmic; the sequence is HPKYRVAIAQ…LEDDVTLRHL (171 aa). Residues 445–486 are disordered; that stretch reads GELKASSSPQVQRSKTPKVPGPSTCRPMKGQGARPSSLRGDQ. A compositionally biased stretch (polar residues) spans 449-458; that stretch reads ASSSPQVQRS.

The protein belongs to the G-protein coupled receptor 1 family. Opsin subfamily. In terms of tissue distribution, expressed in the retinal pigment epithelium and ganglion cell layer (at protein level). Also expressed in amacrine cell layers of the retina. Weakly expressed in vibrissae, and tail. Observed with processes in the outer strata of inner plexiform layer (IPL) close to the inner nuclear layer (INL) or is found to be bistratified with processes located both in the inner (ON) or outer (OFF) layers of the IPL (at protein level). A second population of isoform 1 is identified in processes which are confined to the inner layer of the IPL near to the ganglion cell layer (GCL) (at protein level). As to expression, about 40 times more abundant than isoform 1 in the retina (at protein level). Isoform 2 is involved in processes localized to the outer IPL or is bistratified with processes in both the inner and outer layers of the IPL (at protein level). Isoform 2 is absent in the processes confined only to the inner layer of the IPL (at protein level).

It is found in the cell membrane. It localises to the cell projection. The protein localises to the axon. Its subcellular location is the dendrite. The protein resides in the perikaryon. Functionally, photoreceptor that binds cis-retinaldehydes. Contributes to pupillar reflex, photoentrainment and other non-image forming responses to light. May be involved in the optokinetic visual tracking response. May be involved in the regulation of retinal hyaloid vessel growth and regression. This Mus musculus (Mouse) protein is Melanopsin (Opn4).